Consider the following 381-residue polypeptide: Chaperone protein DnaJ (381 aa).

In terms of domain architecture, J spans 5–70 (DFYEVLGVSR…QKKAAYDQYG (66 aa)). The CR-type zinc-finger motif lies at 136–214 (GVSKEIEVPT…CHGQGRKQKT (79 aa)). Residues Cys149, Cys152, Cys166, Cys169, Cys188, Cys191, Cys202, and Cys205 each coordinate Zn(2+). 4 CXXCXGXG motif repeats span residues 149 to 156 (CDTCEGTG), 166 to 173 (CGTCHGHG), 188 to 195 (CPTCHGKG), and 202 to 209 (CNVCHGQG).

This sequence belongs to the DnaJ family. In terms of assembly, homodimer. It depends on Zn(2+) as a cofactor.

Its subcellular location is the cytoplasm. Its function is as follows. Participates actively in the response to hyperosmotic and heat shock by preventing the aggregation of stress-denatured proteins and by disaggregating proteins, also in an autonomous, DnaK-independent fashion. Unfolded proteins bind initially to DnaJ; upon interaction with the DnaJ-bound protein, DnaK hydrolyzes its bound ATP, resulting in the formation of a stable complex. GrpE releases ADP from DnaK; ATP binding to DnaK triggers the release of the substrate protein, thus completing the reaction cycle. Several rounds of ATP-dependent interactions between DnaJ, DnaK and GrpE are required for fully efficient folding. Also involved, together with DnaK and GrpE, in the DNA replication of plasmids through activation of initiation proteins. The polypeptide is Chaperone protein DnaJ (Vibrio vulnificus (strain CMCP6)).